Reading from the N-terminus, the 365-residue chain is Large ribosomal subunit protein uL3 (365 aa).

Residues 343–365 (RPPKKKPPVQRPQITYVSVESKQ) are disordered. Positions 354–365 (PQITYVSVESKQ) are enriched in polar residues.

Belongs to the universal ribosomal protein uL3 family. Part of the 50S ribosomal subunit. Forms a cluster with proteins L14 and L24e.

Its function is as follows. One of the primary rRNA binding proteins, it binds directly near the 3'-end of the 23S rRNA, where it nucleates assembly of the 50S subunit. This chain is Large ribosomal subunit protein uL3, found in Pyrococcus furiosus (strain ATCC 43587 / DSM 3638 / JCM 8422 / Vc1).